The chain runs to 144 residues: Sirohydrochlorin cobaltochelatase (144 aa).

The Proton acceptor role is filled by His9. Residue His9 participates in Co(2+) binding. Position 9 (His9) interacts with Ni(2+). Residues Glu45 and 70–75 (LAPGNH) each bind substrate. His75 is a binding site for Co(2+). His75 contacts Ni(2+). Residues 89 to 112 (GDDEGGHHHHHDHEHHHHHHDTTA) form a disordered region. The segment covering 95-108 (HHHHHDHEHHHHHH) has biased composition (basic residues).

This sequence belongs to the CbiX family. CbiXS subfamily. In terms of assembly, homotetramer; dimer of dimers.

It carries out the reaction Co-sirohydrochlorin + 2 H(+) = sirohydrochlorin + Co(2+). It catalyses the reaction Ni-sirohydrochlorin + 2 H(+) = sirohydrochlorin + Ni(2+). It functions in the pathway cofactor biosynthesis; adenosylcobalamin biosynthesis; cob(II)yrinate a,c-diamide from sirohydrochlorin (anaerobic route): step 1/10. In terms of biological role, catalyzes the insertion of Co(2+) into sirohydrochlorin as part of the anaerobic pathway to cobalamin biosynthesis. Involved in the biosynthesis of the unique nickel-containing tetrapyrrole coenzyme F430, the prosthetic group of methyl-coenzyme M reductase (MCR), which plays a key role in methanogenesis and anaerobic methane oxidation. Catalyzes the insertion of Ni(2+) into sirohydrochlorin to yield Ni-sirohydrochlorin. This Methanococcus maripaludis (strain DSM 14266 / JCM 13030 / NBRC 101832 / S2 / LL) protein is Sirohydrochlorin cobaltochelatase.